Consider the following 352-residue polypeptide: Ribosomal RNA large subunit methyltransferase M (352 aa).

Residues S187, 218–221, D237, D257, and D273 contribute to the S-adenosyl-L-methionine site; that span reads APGG. The Proton acceptor role is filled by K302.

This sequence belongs to the class I-like SAM-binding methyltransferase superfamily. RNA methyltransferase RlmE family. RlmM subfamily. In terms of assembly, monomer.

The protein localises to the cytoplasm. The enzyme catalyses cytidine(2498) in 23S rRNA + S-adenosyl-L-methionine = 2'-O-methylcytidine(2498) in 23S rRNA + S-adenosyl-L-homocysteine + H(+). Catalyzes the 2'-O-methylation at nucleotide C2498 in 23S rRNA. This is Ribosomal RNA large subunit methyltransferase M from Methylococcus capsulatus (strain ATCC 33009 / NCIMB 11132 / Bath).